The primary structure comprises 320 residues: Mechanosensory protein 3 (320 aa).

LIM zinc-binding domains follow at residues 29–79 and 89–145; these read CNCC…CSQH and CAGC…CMTH. The homeobox DNA-binding region spans 216-275; sequence RRGPRTTIKQNQLDVLNEMFSNTPKPSKHARAKKALETGLSMRVIQVWFQNRRSKERRLK.

Its subcellular location is the nucleus. Functionally, specifies differentiation of the set of six touch receptor neurons. Binds cooperatively as a heterodimer with unc-86 to sites in the mec-3 gene promoter. This Caenorhabditis remanei (Caenorhabditis vulgaris) protein is Mechanosensory protein 3 (mec-3).